The chain runs to 730 residues: Patatin-like phospholipase domain-containing protein CIMG_04897 (730 aa).

A compositionally biased stretch (basic residues) spans 1 to 11 (MTANSSRRRLQ). A disordered region spans residues 1 to 26 (MTANSSRRRLQMKSPRTDGDEKEEDY). A helical transmembrane segment spans residues 97-117 (WPFLLFVLSWIVFLGALYILT). The PNPLA domain occupies 281 to 472 (LCLSGGATLA…RTDIPLKALD (192 aa)). Positions 312 to 316 (GTSGG) match the GXSXG motif. Catalysis depends on Ser-314, which acts as the Nucleophile. Asp-459 acts as the Proton acceptor in catalysis. A disordered region spans residues 667 to 730 (GHFREAPTSH…QGQSSGTKIG (64 aa)). The span at 721 to 730 (QGQSSGTKIG) shows a compositional bias: polar residues.

This sequence belongs to the PLPL family.

Its subcellular location is the membrane. In terms of biological role, probable lipid hydrolase. The protein is Patatin-like phospholipase domain-containing protein CIMG_04897 of Coccidioides immitis (strain RS) (Valley fever fungus).